Consider the following 486-residue polypeptide: MFFFSTHLILKILFFWSITRNIFGATYTSLLLNNTINGNINDQSTAYYNLTWEGNTAYNVSLTLSTCTAFDGANDLMLYISNNTFDEALPLDNFTITASENGLATIFVTGYSPLYIAVSSAFSQFAPNFFVESGESTLEGNNVINYELAAGIDTPFSQYNATKFLFAQDTDFQAALLITGNLTTNETSIIPSYEIYVNPSNSTYDNTFNKFSSSFCAFQNNPSTVNTNNADRSMTLRGLGPFAKEQFYLKGLDPNVTYTAYLVEPNIGQPGGTVYPGVTFTTKTSPACQLIYDLQFCSEVAYAVPGNSSLFSASALAEWYDQQAYGYYQNFTYTLDLIPCNATSWSAYSLLKNCSDCANSYKNWLCASVIPRCADINDNSSYLIYKNYDSRYPLIDEVIQPGPYKEVLPCSYLCYSLASSCPLDLGFACPKAGYGLEFSYGEVSNVTGLITCNAPGVEFYESGSALLNISWRTFFISLIFWILFVE.

Residues 1 to 24 (MFFFSTHLILKILFFWSITRNIFG) form the signal peptide. Topologically, residues 25–464 (ATYTSLLLNN…PGVEFYESGS (440 aa)) are extracellular. Asn33, Asn49, Asn59, Asn82, and Asn93 each carry an N-linked (GlcNAc...) asparagine glycan. The chain crosses the membrane as a helical span at residues 465–485 (ALLNISWRTFFISLIFWILFV). Position 486 (Glu486) is a topological domain, cytoplasmic.

It is found in the cell membrane. Functionally, calcium-permeable, cation-selective stretch-activated channel (SAC) that functions together with CCH1 to mediate calcium entry into cells. Required during mating. This is Stretch-activated cation channel yam8 from Schizosaccharomyces pombe (strain 972 / ATCC 24843) (Fission yeast).